A 520-amino-acid chain; its full sequence is Probable bifunctional tRNA threonylcarbamoyladenosine biosynthesis protein (520 aa).

The kae1 stretch occupies residues 1–318 (MKIGPVLGIE…YRADQVLVTW (318 aa)). The Fe cation site is built by His-105, His-109, and Tyr-126. L-threonylcarbamoyladenylate contacts are provided by residues 126–130 (YASGA), Asp-158, Gly-171, Glu-175, and Asn-251. Asp-279 contributes to the Fe cation binding site. The region spanning 327 to 520 (RHPDAYSARG…HEIELRGRYL (194 aa)) is the Protein kinase domain. ATP contacts are provided by residues 333-341 (SARGAEAIV) and Lys-350. Asp-437 serves as the catalytic Proton acceptor; for kinase activity.

The protein in the N-terminal section; belongs to the KAE1 / TsaD family. This sequence in the C-terminal section; belongs to the protein kinase superfamily. Tyr protein kinase family. BUD32 subfamily. Component of the KEOPS complex that consists of Kae1, Bud32, Cgi121 and Pcc1; the whole complex dimerizes. Fe(2+) serves as cofactor.

Its subcellular location is the cytoplasm. The enzyme catalyses L-seryl-[protein] + ATP = O-phospho-L-seryl-[protein] + ADP + H(+). It carries out the reaction L-threonyl-[protein] + ATP = O-phospho-L-threonyl-[protein] + ADP + H(+). The catalysed reaction is L-threonylcarbamoyladenylate + adenosine(37) in tRNA = N(6)-L-threonylcarbamoyladenosine(37) in tRNA + AMP + H(+). Its function is as follows. Required for the formation of a threonylcarbamoyl group on adenosine at position 37 (t(6)A37) in tRNAs that read codons beginning with adenine. Is a component of the KEOPS complex that is probably involved in the transfer of the threonylcarbamoyl moiety of threonylcarbamoyl-AMP (TC-AMP) to the N6 group of A37. The Kae1 domain likely plays a direct catalytic role in this reaction. The Bud32 domain probably displays kinase activity that regulates Kae1 function. The protein is Probable bifunctional tRNA threonylcarbamoyladenosine biosynthesis protein of Methanospirillum hungatei JF-1 (strain ATCC 27890 / DSM 864 / NBRC 100397 / JF-1).